Consider the following 161-residue polypeptide: Ribosome maturation factor RimP (161 aa).

Belongs to the RimP family.

Its subcellular location is the cytoplasm. Functionally, required for maturation of 30S ribosomal subunits. The sequence is that of Ribosome maturation factor RimP from Rickettsia massiliae (strain Mtu5).